The chain runs to 209 residues: Putative tripartite motif-containing protein 61 (209 aa).

The segment at 16-57 (CPICLDYLKDPVTISCGHNFCLSCIIMSWKDLHDSFPCPFCH) adopts an RING-type zinc-finger fold. A B box-type zinc finger spans residues 92-133 (EEKHVCKKHNQVLTFFCQKDLELLCPRCSLSTDHQHHCVWPI). Zn(2+) is bound by residues Cys97, His100, Cys119, and His125.

This Homo sapiens (Human) protein is Putative tripartite motif-containing protein 61 (TRIM61).